A 232-amino-acid chain; its full sequence is Cytidylate kinase (232 aa).

19-27 is an ATP binding site; the sequence is GPAGVGKTT.

It belongs to the cytidylate kinase family. Type 1 subfamily.

Its subcellular location is the cytoplasm. The enzyme catalyses CMP + ATP = CDP + ADP. The catalysed reaction is dCMP + ATP = dCDP + ADP. The chain is Cytidylate kinase from Nitratidesulfovibrio vulgaris (strain ATCC 29579 / DSM 644 / CCUG 34227 / NCIMB 8303 / VKM B-1760 / Hildenborough) (Desulfovibrio vulgaris).